The chain runs to 416 residues: 46 kDa surface antigen (416 aa).

The first 27 residues, 1–27, serve as a signal peptide directing secretion; that stretch reads MLRKKFLYSSAIYATSLASIIAFVAAG. Cysteine 28 is lipidated: N-palmitoyl cysteine. A lipid anchor (S-diacylglycerol cysteine) is attached at cysteine 28.

The protein resides in the cell membrane. The polypeptide is 46 kDa surface antigen (p46) (Mesomycoplasma hyopneumoniae (strain 232) (Mycoplasma hyopneumoniae)).